Consider the following 162-residue polypeptide: tRNA (cytidine(34)-2'-O)-methyltransferase (162 aa).

S-adenosyl-L-methionine is bound by residues Leu-83, Gly-105, Ile-127, and Ser-135.

It belongs to the class IV-like SAM-binding methyltransferase superfamily. RNA methyltransferase TrmH family. TrmL subfamily. As to quaternary structure, homodimer.

Its subcellular location is the cytoplasm. The catalysed reaction is cytidine(34) in tRNA + S-adenosyl-L-methionine = 2'-O-methylcytidine(34) in tRNA + S-adenosyl-L-homocysteine + H(+). It catalyses the reaction 5-carboxymethylaminomethyluridine(34) in tRNA(Leu) + S-adenosyl-L-methionine = 5-carboxymethylaminomethyl-2'-O-methyluridine(34) in tRNA(Leu) + S-adenosyl-L-homocysteine + H(+). Methylates the ribose at the nucleotide 34 wobble position in the two leucyl isoacceptors tRNA(Leu)(CmAA) and tRNA(Leu)(cmnm5UmAA). Catalyzes the methyl transfer from S-adenosyl-L-methionine to the 2'-OH of the wobble nucleotide. The chain is tRNA (cytidine(34)-2'-O)-methyltransferase from Yersinia pestis.